Reading from the N-terminus, the 79-residue chain is Exodeoxyribonuclease 7 small subunit (79 aa).

Belongs to the XseB family. Heterooligomer composed of large and small subunits.

It is found in the cytoplasm. The catalysed reaction is Exonucleolytic cleavage in either 5'- to 3'- or 3'- to 5'-direction to yield nucleoside 5'-phosphates.. Functionally, bidirectionally degrades single-stranded DNA into large acid-insoluble oligonucleotides, which are then degraded further into small acid-soluble oligonucleotides. The sequence is that of Exodeoxyribonuclease 7 small subunit from Geobacillus kaustophilus (strain HTA426).